Here is a 371-residue protein sequence, read N- to C-terminus: 4-hydroxyprotoasukamycin monooxygenase (371 aa).

It belongs to the bacterial luciferase oxidoreductase family. The cofactor is FMN.

It carries out the reaction 4-hydroxyprotoasukamycin + NADH + O2 + H(+) = asukamycin + NAD(+) + H2O. It functions in the pathway antibiotic biosynthesis. Functionally, involved in the biosynthesis of the antibiotic asukamycin. Catalyzes the epoxidation of 4-hydroxyprotoasukamycin to the final product, asukamycin. Can also convert some 4-hydroxyprotoasukamycin derivatives to their asukamycin derivatives, but cannot use protoasukamycin as substrate. Can also use NADPH, but catalytic efficiency is 20-fold higher with NADH. This chain is 4-hydroxyprotoasukamycin monooxygenase, found in Streptomyces nodosus subsp. asukaensis.